The primary structure comprises 454 residues: Neuraminidase (454 aa).

Topologically, residues 1-6 (MNPNQK) are intravirion. The helical transmembrane segment at 7-27 (IITIGSICLVVGLISLILQIG) threads the bilayer. Positions 11-33 (GSICLVVGLISLILQIGNIISIW) are involved in apical transport and lipid raft association. Over 28 to 454 (NIISIWISHS…GAELPFSIDK (427 aa)) the chain is Virion surface. The hypervariable stalk region stretch occupies residues 36 to 75 (HSIQTGSQNHTGICNQNIITYKNSTWVKDTTSVILTGNSS). N-linked (GlcNAc...) asparagine; by host glycans are attached at residues N44, N58, and N73. Residues 76-454 (LCPIRGWAIY…GAELPFSIDK (379 aa)) form a head of neuraminidase region. Intrachain disulfides connect C77–C402, C109–C114, C169–C216, C218–C223, C264–C277, C266–C275, C303–C320, and C406–C431. R103 contacts substrate. N131 carries N-linked (GlcNAc...) asparagine; by host glycosylation. D136 functions as the Proton donor/acceptor in the catalytic mechanism. Residue R137 coordinates substrate. N-linked (GlcNAc...) asparagine; by host glycosylation occurs at N220. A substrate-binding site is contributed by 262 to 263 (EE). Substrate is bound at residue R278. 4 residues coordinate Ca(2+): D279, G283, D309, and N329. R353 lines the substrate pocket. Y387 functions as the Nucleophile in the catalytic mechanism.

It belongs to the glycosyl hydrolase 34 family. As to quaternary structure, homotetramer. Ca(2+) is required as a cofactor. N-glycosylated.

The protein localises to the virion membrane. The protein resides in the host apical cell membrane. It carries out the reaction Hydrolysis of alpha-(2-&gt;3)-, alpha-(2-&gt;6)-, alpha-(2-&gt;8)- glycosidic linkages of terminal sialic acid residues in oligosaccharides, glycoproteins, glycolipids, colominic acid and synthetic substrates.. Inhibited by the neuraminidase inhibitors zanamivir (Relenza) and oseltamivir (Tamiflu). These drugs interfere with the release of progeny virus from infected cells and are effective against all influenza strains. Resistance to neuraminidase inhibitors is quite rare. In terms of biological role, catalyzes the removal of terminal sialic acid residues from viral and cellular glycoconjugates. Cleaves off the terminal sialic acids on the glycosylated HA during virus budding to facilitate virus release. Additionally helps virus spread through the circulation by further removing sialic acids from the cell surface. These cleavages prevent self-aggregation and ensure the efficient spread of the progeny virus from cell to cell. Otherwise, infection would be limited to one round of replication. Described as a receptor-destroying enzyme because it cleaves a terminal sialic acid from the cellular receptors. May facilitate viral invasion of the upper airways by cleaving the sialic acid moieties on the mucin of the airway epithelial cells. Likely to plays a role in the budding process through its association with lipid rafts during intracellular transport. May additionally display a raft-association independent effect on budding. Plays a role in the determination of host range restriction on replication and virulence. Sialidase activity in late endosome/lysosome traffic seems to enhance virus replication. This chain is Neuraminidase, found in Aves (Human).